We begin with the raw amino-acid sequence, 274 residues long: Ribonucleoside-diphosphate reductase small chain (274 aa).

D70, E101, and H104 together coordinate Fe cation. The active site involves Y108. Residues E163, E197, and H200 each contribute to the Fe cation site.

This sequence belongs to the ribonucleoside diphosphate reductase small chain family. In terms of assembly, heterodimer of a large and a small chain. The cofactor is Fe cation.

The catalysed reaction is a 2'-deoxyribonucleoside 5'-diphosphate + [thioredoxin]-disulfide + H2O = a ribonucleoside 5'-diphosphate + [thioredoxin]-dithiol. In terms of biological role, ribonucleoside-diphosphate reductase holoenzyme provides the precursors necessary for viral DNA synthesis. Allows virus growth in non-dividing cells. Catalyzes the biosynthesis of deoxyribonucleotides from the corresponding ribonucleotides. In Sus scrofa (Pig), this protein is Ribonucleoside-diphosphate reductase small chain.